Reading from the N-terminus, the 134-residue chain is Large ribosomal subunit protein bL20 (134 aa).

This sequence belongs to the bacterial ribosomal protein bL20 family.

In terms of biological role, binds directly to 23S ribosomal RNA and is necessary for the in vitro assembly process of the 50S ribosomal subunit. It is not involved in the protein synthesizing functions of that subunit. In Rhizobium etli (strain CIAT 652), this protein is Large ribosomal subunit protein bL20.